A 681-amino-acid polypeptide reads, in one-letter code: MITFADLAEPAPGAERCVDRQLWLACAGGMCTVPPVGAAVYYFPQGHAEHALGLAAPELSAARVPALVPCRVASVRYMADPDTDEVFARIRLVPLRAAEDGDVEEDGAAAGEEHEKPASFAKTLTQSDANNGGGFSVPRYCAETIFPRLDYAADPPVQTVVAKDVHGVAWNFRHIYRGTPRRHLLTTGWSTFVNQKKLVAGDSIVFLRGDGGDLHVGIRRAKRGFCGGGGGAEEASLPGWDQYGGLMRGNASPCAAAKGRGKVRAEDLVEAARLANGGQPFEVVYYPRASTPEFCVRAAAVRAAMRVQWCPGMRFKMAFETEDSSRISWFMGTVASVQVADPIRWPQSPWRLLQVTWDEPDLLQNVKRVSPWLVELVSSMPAINLSSFSPPRKKPRILAYPEFPFEGQLLNPAFPPNPLAHGHHHYHHNHPSFFPFPDVSAPAGIQGARHAQFGPSLSDLHLTHLQSSLMYPGLRRPDHVGPTSIPPPRISTDLTMGSSPPARALSMGAKKPDDAKPPGLMLFGQRILTERQMSLSGTTSPAATGNSSLNWNTEKGASEGSGSGVIQNSPTDNTSSERLQWFRENSTVSELGLEPGQCKVFIESDTVGRNLDLSSLASFEQLYGRLSEMFCIDSAELRSRVLYRGATGEVRHAGDEPFSEFIKLARRLTILTDAGSDNLGS.

Positions Phe-120–Lys-222 form a DNA-binding region, TF-B3. Disordered regions lie at residues Leu-474–Pro-518 and Ser-534–Glu-577. Polar residues-rich tracts occupy residues Ser-534 to Lys-555 and Gly-564 to Glu-577. The PB1 domain occupies Pro-595 to Gly-675.

The protein belongs to the ARF family. Homodimers and heterodimers. As to expression, expressed in roots, culms, leaves and young panicles.

It localises to the nucleus. In terms of biological role, auxin response factors (ARFs) are transcriptional factors that bind specifically to the DNA sequence 5'-TGTCTC-3' found in the auxin-responsive promoter elements (AuxREs). This is Auxin response factor 8 (ARF8) from Oryza sativa subsp. japonica (Rice).